Consider the following 57-residue polypeptide: Large ribosomal subunit protein bL32 (57 aa).

It belongs to the bacterial ribosomal protein bL32 family.

This Geobacillus sp. (strain WCH70) protein is Large ribosomal subunit protein bL32.